Consider the following 407-residue polypeptide: Phosphopentomutase (407 aa).

The Mn(2+) site is built by Asp10, Asp306, His311, Asp347, His348, and His359.

This sequence belongs to the phosphopentomutase family. The cofactor is Mn(2+).

It is found in the cytoplasm. The catalysed reaction is 2-deoxy-alpha-D-ribose 1-phosphate = 2-deoxy-D-ribose 5-phosphate. It catalyses the reaction alpha-D-ribose 1-phosphate = D-ribose 5-phosphate. It functions in the pathway carbohydrate degradation; 2-deoxy-D-ribose 1-phosphate degradation; D-glyceraldehyde 3-phosphate and acetaldehyde from 2-deoxy-alpha-D-ribose 1-phosphate: step 1/2. In terms of biological role, isomerase that catalyzes the conversion of deoxy-ribose 1-phosphate (dRib-1-P) and ribose 1-phosphate (Rib-1-P) to deoxy-ribose 5-phosphate (dRib-5-P) and ribose 5-phosphate (Rib-5-P), respectively. The polypeptide is Phosphopentomutase (Salmonella arizonae (strain ATCC BAA-731 / CDC346-86 / RSK2980)).